We begin with the raw amino-acid sequence, 163 residues long: uncharacterized protein (163 aa).

Disordered stretches follow at residues 1–78 (MHSL…NPHS) and 115–163 (PKWL…LPCH).

This is an uncharacterized protein from Homo sapiens (Human).